The chain runs to 737 residues: Procollagen-lysine,2-oxoglutarate 5-dioxygenase 2 (737 aa).

A signal peptide spans 1–25; that stretch reads MGGCTVKPQLLLLALVLHPWNPCLG. Residues Asn63, Asn209, and Asn297 are each glycosylated (N-linked (GlcNAc...) asparagine). The residue at position 320 (Thr320) is a Phosphothreonine. Tyr323 bears the Phosphotyrosine mark. Asn365 and Asn522 each carry an N-linked (GlcNAc...) asparagine glycan. The Fe2OG dioxygenase domain occupies 644 to 737; that stretch reads KGFALLNFVV…RYIAVSFIDP (94 aa). Fe cation-binding residues include His666 and Asp668. Asn696 carries N-linked (GlcNAc...) asparagine glycosylation. Lys704 carries the N6-succinyllysine modification. Fe cation is bound at residue His718. Residue Asn725 is glycosylated (N-linked (GlcNAc...) asparagine). Arg728 is a catalytic residue.

As to quaternary structure, homodimer. Requires Fe(2+) as cofactor. It depends on L-ascorbate as a cofactor. In terms of tissue distribution, highly expressed in pancreas and muscle. Isoform 1 and isoform 2 are expressed in the majority of the examined cell types. Isoform 2 is specifically expressed in skin, lung, dura and aorta.

Its subcellular location is the rough endoplasmic reticulum membrane. The catalysed reaction is L-lysyl-[collagen] + 2-oxoglutarate + O2 = (5R)-5-hydroxy-L-lysyl-[collagen] + succinate + CO2. Forms hydroxylysine residues in -Xaa-Lys-Gly- sequences in collagens. These hydroxylysines serve as sites of attachment for carbohydrate units and are essential for the stability of the intermolecular collagen cross-links. The protein is Procollagen-lysine,2-oxoglutarate 5-dioxygenase 2 of Homo sapiens (Human).